The sequence spans 319 residues: Acetyl-coenzyme A carboxylase carboxyl transferase subunit alpha (319 aa).

In terms of domain architecture, CoA carboxyltransferase C-terminal spans 35 to 296; it reads DLEKEIKQLE…KQRLLEQLKE (262 aa).

The protein belongs to the AccA family. Acetyl-CoA carboxylase is a heterohexamer composed of biotin carboxyl carrier protein (AccB), biotin carboxylase (AccC) and two subunits each of ACCase subunit alpha (AccA) and ACCase subunit beta (AccD).

The protein resides in the cytoplasm. The enzyme catalyses N(6)-carboxybiotinyl-L-lysyl-[protein] + acetyl-CoA = N(6)-biotinyl-L-lysyl-[protein] + malonyl-CoA. Its pathway is lipid metabolism; malonyl-CoA biosynthesis; malonyl-CoA from acetyl-CoA: step 1/1. Functionally, component of the acetyl coenzyme A carboxylase (ACC) complex. First, biotin carboxylase catalyzes the carboxylation of biotin on its carrier protein (BCCP) and then the CO(2) group is transferred by the carboxyltransferase to acetyl-CoA to form malonyl-CoA. This Aliivibrio fischeri (strain MJ11) (Vibrio fischeri) protein is Acetyl-coenzyme A carboxylase carboxyl transferase subunit alpha.